The chain runs to 118 residues: NADH-quinone oxidoreductase subunit A (118 aa).

The next 3 helical transmembrane spans lie at 5–25, 62–82, and 87–107; these read YAFI…PLVL, LYAL…PWAV, and LGLF…IGLV.

The protein belongs to the complex I subunit 3 family. In terms of assembly, NDH-1 is composed of 14 different subunits. Subunits NuoA, H, J, K, L, M, N constitute the membrane sector of the complex.

It localises to the cell membrane. It carries out the reaction a quinone + NADH + 5 H(+)(in) = a quinol + NAD(+) + 4 H(+)(out). NDH-1 shuttles electrons from NADH, via FMN and iron-sulfur (Fe-S) centers, to quinones in the respiratory chain. The immediate electron acceptor for the enzyme in this species is believed to be ubiquinone. Couples the redox reaction to proton translocation (for every two electrons transferred, four hydrogen ions are translocated across the cytoplasmic membrane), and thus conserves the redox energy in a proton gradient. The sequence is that of NADH-quinone oxidoreductase subunit A from Herpetosiphon aurantiacus (strain ATCC 23779 / DSM 785 / 114-95).